The chain runs to 684 residues: DNA helicase IV (684 aa).

The UvrD-like helicase ATP-binding domain occupies 195-505; that stretch reads SPLNPAQARA…CDLDTTYRFN (311 aa). Residues 216–223 and Arg503 each bind ATP; that span reads AGAGSGKT.

It belongs to the helicase family. UvrD subfamily.

The catalysed reaction is Couples ATP hydrolysis with the unwinding of duplex DNA by translocating in the 3'-5' direction.. It carries out the reaction ATP + H2O = ADP + phosphate + H(+). Helicase IV catalyzes the unwinding of duplex DNA in the 3' to 5' direction with respect to the bound single strand in a reaction that is dependent upon the hydrolysis of ATP. This chain is DNA helicase IV (helD), found in Escherichia coli (strain K12).